A 501-amino-acid polypeptide reads, in one-letter code: L-ornithine N(5)-monooxygenase (501 aa).

A compositionally biased stretch (low complexity) spans 1 to 16; that stretch reads MNGTSTTGNGFTNGTN. The tract at residues 1–40 is disordered; the sequence is MNGTSTTGNGFTNGTNYPVPKLELQPETTSTSPTRAQTHP. Residues 26–37 show a composition bias toward polar residues; it reads PETTSTSPTRAQ. FAD contacts are provided by residues 92–100 and Q111; that span reads EKQSNFAWH. A substrate-binding site is contributed by K116. FAD is bound at residue V177. Residue 263–266 participates in NADP(+) binding; the sequence is SGQS. Substrate contacts are provided by residues 304–307 and N334; that span reads NELF. Residue 334 to 336 coordinates NADP(+); sequence NYS. Position 476–478 (476–478) interacts with FAD; sequence SLL. S479 contributes to the substrate binding site.

It belongs to the lysine N(6)-hydroxylase/L-ornithine N(5)-oxygenase family. As to quaternary structure, homotetramer. It depends on FAD as a cofactor.

The enzyme catalyses L-ornithine + NADPH + O2 = N(5)-hydroxy-L-ornithine + NADP(+) + H2O. It carries out the reaction L-ornithine + NADH + O2 = N(5)-hydroxy-L-ornithine + NAD(+) + H2O. The protein operates within siderophore biosynthesis. L-ornithine N(5)-monooxygenase; part of the siderophore biosynthetic pathway. Arthroderma benhamiae produces 2 types of extracellular siderophores, ferrichrome C and ferricrocin. The biosynthesis of these siderophores depends on the hydroxylation of ornithine to N(5)-hydroxyornithine, catalyzed by the monooxygenase sidA. The structure of ferricrocin differs from ferrichrome C only by a serine for alanine substitution and the assembly of both siderophores is suggested to be performed by the nonribosomal peptide synthase (NRPS) sidC. In Arthroderma benhamiae (strain ATCC MYA-4681 / CBS 112371) (Trichophyton mentagrophytes), this protein is L-ornithine N(5)-monooxygenase.